The primary structure comprises 82 residues: Cortexin-1 (82 aa).

Residues 1-20 (MSSAWTLSPEPLPPSTGPPV) form a disordered region. Residues 30-50 (TVFAFVLCLLVVLVLLMVRCV) traverse the membrane as a helical segment.

It belongs to the cortexin family.

It localises to the membrane. May mediate extracellular or intracellular signaling of cortical neurons during forebrain development. The sequence is that of Cortexin-1 (Ctxn1) from Mus musculus (Mouse).